A 168-amino-acid chain; its full sequence is ATP synthase subunit b (168 aa).

Residues 9–29 form a helical membrane-spanning segment; the sequence is SIPFGTIAYTLFIFLLLLVML.

The protein belongs to the ATPase B chain family. As to quaternary structure, F-type ATPases have 2 components, F(1) - the catalytic core - and F(0) - the membrane proton channel. F(1) has five subunits: alpha(3), beta(3), gamma(1), delta(1), epsilon(1). F(0) has three main subunits: a(1), b(2) and c(10-14). The alpha and beta chains form an alternating ring which encloses part of the gamma chain. F(1) is attached to F(0) by a central stalk formed by the gamma and epsilon chains, while a peripheral stalk is formed by the delta and b chains.

Its subcellular location is the cell membrane. Functionally, f(1)F(0) ATP synthase produces ATP from ADP in the presence of a proton or sodium gradient. F-type ATPases consist of two structural domains, F(1) containing the extramembraneous catalytic core and F(0) containing the membrane proton channel, linked together by a central stalk and a peripheral stalk. During catalysis, ATP synthesis in the catalytic domain of F(1) is coupled via a rotary mechanism of the central stalk subunits to proton translocation. Component of the F(0) channel, it forms part of the peripheral stalk, linking F(1) to F(0). This Bacillus cereus (strain B4264) protein is ATP synthase subunit b.